The chain runs to 171 residues: AN1-type zinc finger protein 2A (171 aa).

AN1-type zinc fingers lie at residues 4–52 and 94–142; these read PDLG…KKDV and KVFT…SSAS. Zn(2+)-binding residues include Cys10, Cys15, Cys25, Cys28, Cys33, His36, His42, Cys44, Cys100, Cys105, Cys115, Cys118, Cys123, His126, His132, and Cys134. The segment at 134–171 is disordered; that stretch reads CQAGSSSASRGRTSTSRAAEQKPSGVSWLAQRLRRTVK. Over residues 136–151 the composition is skewed to low complexity; the sequence is AGSSSASRGRTSTSRA.

Its subcellular location is the cytoplasm. The protein resides in the nucleus. The chain is AN1-type zinc finger protein 2A (Zfand2a) from Mus musculus (Mouse).